We begin with the raw amino-acid sequence, 453 residues long: Na(+)/H(+) antiporter NhaA (453 aa).

11 consecutive transmembrane segments (helical) span residues 27 to 47, 78 to 98, 114 to 134, 143 to 163, 172 to 192, 201 to 221, 222 to 242, 316 to 336, 346 to 366, 385 to 405, and 421 to 441; these read FLHI…SALI, LHFW…GMEI, ILPI…YFIF, GWAV…ALLG, IILL…IAFF, GLLI…IGLA, SAWL…VTGV, PWVA…VSFA, FLIV…GIIT, WAGI…SIFV, and IGVL…GFIY.

Belongs to the NhaA Na(+)/H(+) (TC 2.A.33) antiporter family.

The protein resides in the cell inner membrane. It catalyses the reaction Na(+)(in) + 2 H(+)(out) = Na(+)(out) + 2 H(+)(in). Its function is as follows. Na(+)/H(+) antiporter that extrudes sodium in exchange for external protons. This Bartonella tribocorum (strain CIP 105476 / IBS 506) protein is Na(+)/H(+) antiporter NhaA.